Consider the following 872-residue polypeptide: Cyanophycin synthetase (872 aa).

One can recognise an ATP-grasp domain in the interval 224–480 (KTILQDAGVP…VAAPVMDMLF (257 aa)). 495–501 (GTNGKTT) contributes to the ATP binding site.

In the C-terminal section; belongs to the MurCDEF family. Homodimer.

It carries out the reaction [L-4-(L-arginin-2-N-yl)aspartate](n) + L-aspartate + ATP = [L-4-(L-arginin-2-N-yl)aspartate](n)-L-aspartate + ADP + phosphate + H(+). It catalyses the reaction [L-4-(L-arginin-2-N-yl)aspartate](n)-L-aspartate + L-arginine + ATP = [L-4-(L-arginin-2-N-yl)aspartate](n+1) + ADP + phosphate + H(+). Its function is as follows. Catalyzes the ATP-dependent polymerization of arginine and aspartate to multi-L-arginyl-poly-L-aspartic acid (cyanophycin; a water-insoluble reserve polymer). This is Cyanophycin synthetase (cphA) from Crocosphaera subtropica (strain ATCC 51142 / BH68) (Cyanothece sp. (strain ATCC 51142)).